An 86-amino-acid chain; its full sequence is Neurotoxin LmNaTx35.2 (86 aa).

Positions 1 to 21 are cleaved as a signal peptide; it reads MQLKIQLLMLVLMTVLTGVLG. One can recognise an LCN-type CS-alpha/beta domain in the interval 22 to 85; it reads KDGYVVHEDT…VYGDKGTYCW (64 aa). 4 disulfide bridges follow: Cys-33–Cys-84, Cys-37–Cys-60, Cys-46–Cys-65, and Cys-50–Cys-67.

The protein belongs to the long (4 C-C) scorpion toxin superfamily. Sodium channel inhibitor family. Alpha subfamily. In terms of tissue distribution, expressed by the venom gland.

It localises to the secreted. In terms of biological role, binds voltage-independently at site-3 of voltage-gated sodium channels (Nav) and inhibits the inactivation of the activated channels, thereby blocking neuronal transmission. The sequence is that of Neurotoxin LmNaTx35.2 from Lychas mucronatus (Chinese swimming scorpion).